A 123-amino-acid polypeptide reads, in one-letter code: Large ribosomal subunit protein uL14 (123 aa).

This sequence belongs to the universal ribosomal protein uL14 family. Part of the 50S ribosomal subunit. Forms a cluster with proteins L3 and L19. In the 70S ribosome, L14 and L19 interact and together make contacts with the 16S rRNA in bridges B5 and B8.

Functionally, binds to 23S rRNA. Forms part of two intersubunit bridges in the 70S ribosome. The chain is Large ribosomal subunit protein uL14 from Histophilus somni (strain 129Pt) (Haemophilus somnus).